Reading from the N-terminus, the 103-residue chain is Small ribosomal subunit protein uS10 (103 aa).

The protein belongs to the universal ribosomal protein uS10 family. In terms of assembly, part of the 30S ribosomal subunit.

Its function is as follows. Involved in the binding of tRNA to the ribosomes. This chain is Small ribosomal subunit protein uS10, found in Tolumonas auensis (strain DSM 9187 / NBRC 110442 / TA 4).